Here is a 294-residue protein sequence, read N- to C-terminus: 33 kDa chaperonin (294 aa).

2 disulfide bridges follow: Cys239–Cys241 and Cys272–Cys275.

This sequence belongs to the HSP33 family. Under oxidizing conditions two disulfide bonds are formed involving the reactive cysteines. Under reducing conditions zinc is bound to the reactive cysteines and the protein is inactive.

Its subcellular location is the cytoplasm. Functionally, redox regulated molecular chaperone. Protects both thermally unfolding and oxidatively damaged proteins from irreversible aggregation. Plays an important role in the bacterial defense system toward oxidative stress. The sequence is that of 33 kDa chaperonin from Listeria welshimeri serovar 6b (strain ATCC 35897 / DSM 20650 / CCUG 15529 / CIP 8149 / NCTC 11857 / SLCC 5334 / V8).